Consider the following 368-residue polypeptide: Polynucleotide 5'-hydroxyl-kinase NOL9 (368 aa).

36 to 43 lines the ATP pocket; that stretch reads GPKNSGKS.

The protein belongs to the Clp1 family. NOL9/GRC3 subfamily.

It is found in the nucleus. The protein resides in the nucleolus. Polynucleotide 5'-kinase involved in rRNA processing. The chain is Polynucleotide 5'-hydroxyl-kinase NOL9 from Arabidopsis thaliana (Mouse-ear cress).